We begin with the raw amino-acid sequence, 250 residues long: UPF0014 membrane protein YjkA (250 aa).

A run of 6 helical transmembrane segments spans residues 3–23 (YLSLSLTMIFVLIALFLSKSF), 32–52 (IIATIRAAVQLLIIGYVLSLI), 57–77 (HPVFILLMVLLMLAVAAQNVI), 91–111 (FAALAIVEIVTQGILLSLHII), 117–137 (YVIPISGMVIGNSMVLSSLFL), and 214–234 (LLIVFTTMASAALTCVILSVL).

The protein belongs to the UPF0014 family.

The protein resides in the cell membrane. The protein is UPF0014 membrane protein YjkA (yjkA) of Bacillus subtilis (strain 168).